A 264-amino-acid polypeptide reads, in one-letter code: MKKISIHDLMKWKQEGKKFATVTAYDASFAQLFEQQEVPVLLVGDSLGMVLQGKSDTLPVTTEEIAYHTRCVRAGSPNSLLMADMPFMSYATPEQACENAGKLMQAGANMVKIEGGEWIAETVRVLAERAVPVCAHLGLTPQSVNIFGGFRIQGRDEAKAEQMVKDALTLEAAGAQIILLECVPASLAERITKACTVPVIGIGAGNVTDGQILVMHDMFGISANYMPKFSKNFLAETGDMRKAVTKYIQDVEQGVFPVAEHTFN.

Positions 45 and 84 each coordinate Mg(2+). 3-methyl-2-oxobutanoate is bound by residues 45 to 46 (DS), D84, and K112. E114 is a Mg(2+) binding site. E181 (proton acceptor) is an active-site residue.

The protein belongs to the PanB family. Homodecamer; pentamer of dimers. It depends on Mg(2+) as a cofactor.

Its subcellular location is the cytoplasm. The catalysed reaction is 3-methyl-2-oxobutanoate + (6R)-5,10-methylene-5,6,7,8-tetrahydrofolate + H2O = 2-dehydropantoate + (6S)-5,6,7,8-tetrahydrofolate. It participates in cofactor biosynthesis; (R)-pantothenate biosynthesis; (R)-pantoate from 3-methyl-2-oxobutanoate: step 1/2. In terms of biological role, catalyzes the reversible reaction in which hydroxymethyl group from 5,10-methylenetetrahydrofolate is transferred onto alpha-ketoisovalerate to form ketopantoate. The sequence is that of 3-methyl-2-oxobutanoate hydroxymethyltransferase 1 from Aliivibrio fischeri (strain ATCC 700601 / ES114) (Vibrio fischeri).